Here is a 492-residue protein sequence, read N- to C-terminus: Putative cytochrome P450 136 (492 aa).

Cysteine 439 is a heme binding site.

It belongs to the cytochrome P450 family. Requires heme as cofactor.

This chain is Putative cytochrome P450 136 (cyp136), found in Mycobacterium tuberculosis (strain CDC 1551 / Oshkosh).